A 44-amino-acid polypeptide reads, in one-letter code: Photosystem I reaction center subunit IX (44 aa).

Residues 9–29 traverse the membrane as a helical segment; it reads YMRSAPVVAAAWITMTAGIII.

It belongs to the PsaJ family.

It is found in the cellular thylakoid membrane. May help in the organization of the PsaE and PsaF subunits. The chain is Photosystem I reaction center subunit IX from Prochlorococcus marinus (strain MIT 9312).